We begin with the raw amino-acid sequence, 498 residues long: Hexokinase-1 (498 aa).

Residues Val-4–Val-24 traverse the membrane as a helical segment. The Hexokinase domain occupies Gly-35 to Ala-488. Residues Gln-89–Val-228 are hexokinase small subdomain. Positions 104, 105, and 106 each coordinate ADP. 4 residues coordinate D-glucose: Thr-194, Lys-195, Asn-229, and Asp-230. The interval Asn-229 to Asp-477 is hexokinase large subdomain. Thr-253 is an ADP binding site. Residues Asn-256, Glu-284, and Glu-315 each contribute to the D-glucose site. Gly-442 contacts ADP.

Belongs to the hexokinase family. Expressed in young and mature leaves, stems, roots, stolons, and developing and mature tubers.

Its subcellular location is the plastid. It localises to the chloroplast outer membrane. The enzyme catalyses a D-hexose + ATP = a D-hexose 6-phosphate + ADP + H(+). It catalyses the reaction D-fructose + ATP = D-fructose 6-phosphate + ADP + H(+). The catalysed reaction is D-glucose + ATP = D-glucose 6-phosphate + ADP + H(+). The protein operates within carbohydrate metabolism; hexose metabolism. It functions in the pathway carbohydrate degradation; glycolysis; D-glyceraldehyde 3-phosphate and glycerone phosphate from D-glucose: step 1/4. In terms of biological role, fructose and glucose phosphorylating enzyme. May be involved in the phosphorylation of glucose during the export from plastids to cytosol. Seems neither to be involved in cell sugar sensing nor in carbohydrate metabolism in tuber. The chain is Hexokinase-1 (HXK1) from Solanum tuberosum (Potato).